Here is a 349-residue protein sequence, read N- to C-terminus: Anthranilate phosphoribosyltransferase (349 aa).

5-phospho-alpha-D-ribose 1-diphosphate is bound by residues G84, 87-88 (GD), T92, 94-97 (NIST), 112-120 (KHGNRAASS), and S124. G84 contacts anthranilate. S96 is a binding site for Mg(2+). N115 lines the anthranilate pocket. An anthranilate-binding site is contributed by R170. D228 and E229 together coordinate Mg(2+).

This sequence belongs to the anthranilate phosphoribosyltransferase family. Homodimer. Mg(2+) serves as cofactor.

The catalysed reaction is N-(5-phospho-beta-D-ribosyl)anthranilate + diphosphate = 5-phospho-alpha-D-ribose 1-diphosphate + anthranilate. It participates in amino-acid biosynthesis; L-tryptophan biosynthesis; L-tryptophan from chorismate: step 2/5. Functionally, catalyzes the transfer of the phosphoribosyl group of 5-phosphorylribose-1-pyrophosphate (PRPP) to anthranilate to yield N-(5'-phosphoribosyl)-anthranilate (PRA). The sequence is that of Anthranilate phosphoribosyltransferase from Leifsonia xyli subsp. xyli (strain CTCB07).